The sequence spans 263 residues: Hydroxyacylglutathione hydrolase (263 aa).

Zn(2+)-binding residues include His-55, His-57, Asp-59, His-60, His-117, Asp-134, and His-172.

This sequence belongs to the metallo-beta-lactamase superfamily. Glyoxalase II family. As to quaternary structure, monomer. It depends on Zn(2+) as a cofactor.

The catalysed reaction is an S-(2-hydroxyacyl)glutathione + H2O = a 2-hydroxy carboxylate + glutathione + H(+). It participates in secondary metabolite metabolism; methylglyoxal degradation; (R)-lactate from methylglyoxal: step 2/2. In terms of biological role, thiolesterase that catalyzes the hydrolysis of S-D-lactoyl-glutathione to form glutathione and D-lactic acid. In Shewanella baltica (strain OS223), this protein is Hydroxyacylglutathione hydrolase.